The chain runs to 434 residues: Maltotriose-binding protein (434 aa).

The signal sequence occupies residues 1–20; the sequence is MRRATYAFALLAILVLGVVA. A disordered region spans residues 28–52; sequence TTTPTQTSPATQPTTTQTPTQTETQ. Positions 29-52 are enriched in low complexity; sequence TTPTQTSPATQPTTTQTPTQTETQ.

Belongs to the bacterial solute-binding protein 1 family.

Involved in an abc transport system for maltotriose. Binds maltotriose much more tightly than maltose. This chain is Maltotriose-binding protein (malE), found in Pyrococcus furiosus (strain ATCC 43587 / DSM 3638 / JCM 8422 / Vc1).